Consider the following 259-residue polypeptide: Phosphatidylglycerol--prolipoprotein diacylglyceryl transferase (259 aa).

Helical transmembrane passes span 9–29 (IIFS…VIGI), 55–75 (FITY…VLLY), 92–112 (EGGM…YLFC), and 117–137 (INFL…LFLG). Arg-138 provides a ligand contact to a 1,2-diacyl-sn-glycero-3-phospho-(1'-sn-glycerol). 3 helical membrane passes run 172–192 (QLYE…YTTF), 201–221 (GLNS…IEIF), and 228–248 (IGFI…MLLL).

It belongs to the Lgt family.

The protein resides in the cell inner membrane. The catalysed reaction is L-cysteinyl-[prolipoprotein] + a 1,2-diacyl-sn-glycero-3-phospho-(1'-sn-glycerol) = an S-1,2-diacyl-sn-glyceryl-L-cysteinyl-[prolipoprotein] + sn-glycerol 1-phosphate + H(+). The protein operates within protein modification; lipoprotein biosynthesis (diacylglyceryl transfer). In terms of biological role, catalyzes the transfer of the diacylglyceryl group from phosphatidylglycerol to the sulfhydryl group of the N-terminal cysteine of a prolipoprotein, the first step in the formation of mature lipoproteins. This is Phosphatidylglycerol--prolipoprotein diacylglyceryl transferase from Rickettsia conorii (strain ATCC VR-613 / Malish 7).